Here is a 129-residue protein sequence, read N- to C-terminus: Fluoride-specific ion channel FluC 1 (129 aa).

The next 3 membrane-spanning stretches (helical) occupy residues 43–63 (ASLLLGLVAGAAGAGAPPAWV), 68–88 (VVSLVGTGLCGALSTYSTFSY), and 100–120 (LLAAANVAGSVLAAFGAAALG). Gly-78 and Ser-81 together coordinate Na(+).

Belongs to the fluoride channel Fluc/FEX (TC 1.A.43) family.

Its subcellular location is the cell membrane. The enzyme catalyses fluoride(in) = fluoride(out). With respect to regulation, na(+) is not transported, but it plays an essential structural role and its presence is essential for fluoride channel function. Its function is as follows. Fluoride-specific ion channel. Important for reducing fluoride concentration in the cell, thus reducing its toxicity. This is Fluoride-specific ion channel FluC 1 from Frankia casuarinae (strain DSM 45818 / CECT 9043 / HFP020203 / CcI3).